A 430-amino-acid chain; its full sequence is tRNA-2-methylthio-N(6)-dimethylallyladenosine synthase (430 aa).

One can recognise an MTTase N-terminal domain in the interval 2–111 (KKIHIKTYGC…IPQAVERAIN (110 aa)). C11, C47, C76, C147, C151, and C154 together coordinate [4Fe-4S] cluster. The Radical SAM core domain maps to 133–364 (RNSKHHAWIT…LNLQKEINKQ (232 aa)). The TRAM domain maps to 367–428 (ENYLNKTVEI…AGPLYGDIIK (62 aa)).

It belongs to the methylthiotransferase family. MiaB subfamily. As to quaternary structure, monomer. It depends on [4Fe-4S] cluster as a cofactor.

The protein localises to the cytoplasm. It catalyses the reaction N(6)-dimethylallyladenosine(37) in tRNA + (sulfur carrier)-SH + AH2 + 2 S-adenosyl-L-methionine = 2-methylsulfanyl-N(6)-dimethylallyladenosine(37) in tRNA + (sulfur carrier)-H + 5'-deoxyadenosine + L-methionine + A + S-adenosyl-L-homocysteine + 2 H(+). Functionally, catalyzes the methylthiolation of N6-(dimethylallyl)adenosine (i(6)A), leading to the formation of 2-methylthio-N6-(dimethylallyl)adenosine (ms(2)i(6)A) at position 37 in tRNAs that read codons beginning with uridine. The polypeptide is tRNA-2-methylthio-N(6)-dimethylallyladenosine synthase (Thermosipho melanesiensis (strain DSM 12029 / CIP 104789 / BI429)).